Here is a 222-residue protein sequence, read N- to C-terminus: Protein Thf1 (222 aa).

Residues 169–208 adopt a coiled-coil conformation; it reads IEKVKRDLELYRSNLDKINQARSLMKELVEQERKRRAQQT. The tract at residues 197-222 is disordered; that stretch reads VEQERKRRAQQTSAPPAVDASSDAPA. The span at 209–222 shows a compositional bias: low complexity; sequence SAPPAVDASSDAPA.

The protein belongs to the THF1 family.

May be involved in photosynthetic membrane biogenesis. The polypeptide is Protein Thf1 (Thermosynechococcus vestitus (strain NIES-2133 / IAM M-273 / BP-1)).